A 364-amino-acid chain; its full sequence is L-carnitine dehydrogenase (364 aa).

Gly-11–Gly-16 lines the NAD(+) pocket. The segment at Lys-336–Gly-364 is disordered. Basic residues predominate over residues Ala-348 to Gly-364.

Belongs to the 3-hydroxyacyl-CoA dehydrogenase family. L-carnitine dehydrogenase subfamily. In terms of assembly, homodimer.

The protein resides in the cytoplasm. The enzyme catalyses carnitine + NAD(+) = 3-dehydrocarnitine + NADH + H(+). It functions in the pathway amine and polyamine metabolism; carnitine metabolism. Its function is as follows. Catalyzes the NAD(+)-dependent oxidation of L-carnitine to 3-dehydrocarnitine. The sequence is that of L-carnitine dehydrogenase from Mesorhizobium japonicum (strain LMG 29417 / CECT 9101 / MAFF 303099) (Mesorhizobium loti (strain MAFF 303099)).